A 472-amino-acid chain; its full sequence is Interferon-induced protein with tetratricopeptide repeats 2 (472 aa).

At Ser-2 the chain carries N-acetylserine. TPR repeat units lie at residues 51–89 (ATMC…ADQA), 90–135 (EIRS…RIES), 136–171 (PELD…KPKN), 172–208 (PEFT…NPDN), 247–280 (TDVL…IPNN), 281–335 (AYLH…NLFR), 336–366 (VCSI…KELT), 367–405 (PVAK…NQKS), and 406–448 (REKE…KMQQ). Residues 446–472 (MQQADEDSERGLESGSLIPSASSWNGE) are disordered. Polar residues predominate over residues 462-472 (LIPSASSWNGE).

This sequence belongs to the IFIT family. Domain-swapped homodimer. Component of an interferon-dependent multiprotein complex, at least composed of IFIT1, IFIT2 and IFIT3. Interacts with IFIT1 and IFIT3. Interacts with STING1/MITA and disrupts its interaction with MAVS or TBK1. Interacts with EIF3E and EIF3C.

The protein localises to the cytoplasm. It localises to the endoplasmic reticulum. Its function is as follows. IFN-induced antiviral protein which inhibits expression of viral messenger RNAs lacking 2'-O-methylation of the 5' cap. The ribose 2'-O-methylation would provide a molecular signature to distinguish between self and non-self mRNAs by the host during viral infection. Viruses evolved several ways to evade this restriction system such as encoding their own 2'-O-methylase for their mRNAs or by stealing host cap containing the 2'-O-methylation (cap snatching mechanism). Binds AU-rich viral RNAs, with or without 5' triphosphorylation, RNA-binding is required for antiviral activity. Can promote apoptosis. The polypeptide is Interferon-induced protein with tetratricopeptide repeats 2 (IFIT2) (Homo sapiens (Human)).